We begin with the raw amino-acid sequence, 22 residues long: Phospholipase A2 (22 aa).

The protein belongs to the phospholipase A2 family. Group II subfamily. The cofactor is Ca(2+). In terms of processing, seven disulfide bonds are present. Expressed by the venom gland.

It is found in the secreted. The catalysed reaction is a 1,2-diacyl-sn-glycero-3-phosphocholine + H2O = a 1-acyl-sn-glycero-3-phosphocholine + a fatty acid + H(+). Its function is as follows. Snake venom phospholipase A2 (PLA2) that inhibits neuromuscular transmission by blocking acetylcholine release from the nerve termini. PLA2 catalyzes the calcium-dependent hydrolysis of the 2-acyl groups in 3-sn-phosphoglycerides. This is Phospholipase A2 from Daboia siamensis (Eastern Russel's viper).